The following is a 364-amino-acid chain: Solute carrier family 35 member C2 (364 aa).

The next 2 helical transmembrane spans lie at 14–34 and 42–62; these read AALTLGLVLLYYCFSIGITFY and FHFPLFMTMLHLAVIFLFSAL. N-linked (GlcNAc...) asparagine glycosylation is present at N102. The next 7 helical transmembrane spans lie at 104–124, 136–156, 166–186, 202–222, 238–258, 272–292, and 295–315; these read SFLYITVSLYTMTKSSAVLFI, LRAALVLVVLLIAGGLFMFTY, FALVLGASFIGGIRWTLTQIL, FHLQPLMFLGLFPLFAIFEGL, LLLWVLGSLLLGGILAFGLGF, LSIAGIFKEVCTLLLAAHLLG, and ISLLNWLGFALCLSGISLHVA. Phosphoserine occurs at positions 335 and 336.

It belongs to the TPT transporter family. SLC35C subfamily.

It is found in the golgi apparatus. The protein localises to the cis-Golgi network membrane. It localises to the endoplasmic reticulum-Golgi intermediate compartment membrane. May play an important role in the cellular response to tissue hypoxia. May be either a GDP-fucose transporter that competes with SLC35C1 for GDP-fucose, or a factor that otherwise enhances the fucosylation of Notch and is required for optimal Notch signaling in mammalian cells. This Mus musculus (Mouse) protein is Solute carrier family 35 member C2 (Slc35c2).